The sequence spans 304 residues: Mitochondrial glycine transporter (304 aa).

3 Solcar repeats span residues 25–114, 121–205, and 215–299; these read HPVI…LKQY, PTAL…TKNI, and LIPI…MMAK. The next 6 membrane-spanning stretches (helical) occupy residues 31–56, 89–115, 127–152, 180–203, 219–245, and 274–292; these read FLCGSISGTCSTLLFQPLDLLKTRLQ, GMSPSIVRCVPGVGIYFGTLYSLKQYF, VMLGVGSRSVAGVCMSPITVIKTRYE, GLTATLLRDAPFSGIYLMFYNQTK, TNFSCGIFAGILASLVTQPADVIKTHM, and GGIPRALRRTLMAAMAWTV.

It belongs to the mitochondrial carrier (TC 2.A.29) family. SLC25A38 subfamily. As to expression, preferentially expressed in erythroid cells.

Its subcellular location is the mitochondrion inner membrane. The catalysed reaction is glycine(in) = glycine(out). In terms of biological role, mitochondrial glycine transporter that imports glycine into the mitochondrial matrix. Plays an important role in providing glycine for the first enzymatic step in heme biosynthesis, the condensation of glycine with succinyl-CoA to produce 5-aminolevulinate (ALA) in the mitochondrial matrix. Required during erythropoiesis. Its function is as follows. Plays a role as pro-apoptotic protein that induces caspase-dependent apoptosis. The sequence is that of Mitochondrial glycine transporter from Homo sapiens (Human).